Here is a 714-residue protein sequence, read N- to C-terminus: ATP-dependent DNA helicase DinG (714 aa).

Residues 17 to 294 (ALQDQIPDFI…TCMEQFRPKT (278 aa)) enclose the Helicase ATP-binding domain. 54–61 (APTGVGKT) provides a ligand contact to ATP. [4Fe-4S] cluster contacts are provided by Cys120, Cys194, Cys199, and Cys205. Residues 248 to 251 (DEGH) carry the DEAH box motif. One can recognise a Helicase C-terminal domain in the interval 517-698 (HIAEMAAYFR…VFPIEQPAVP (182 aa)).

The protein belongs to the helicase family. DinG subfamily. Type 1 sub-subfamily. The cofactor is [4Fe-4S] cluster.

It catalyses the reaction Couples ATP hydrolysis with the unwinding of duplex DNA at the replication fork by translocating in the 5'-3' direction. This creates two antiparallel DNA single strands (ssDNA). The leading ssDNA polymer is the template for DNA polymerase III holoenzyme which synthesizes a continuous strand.. It carries out the reaction ATP + H2O = ADP + phosphate + H(+). DNA-dependent ATPase and 5'-3' DNA helicase. Unwinds D-loops, R-loops, forked DNA and G-quadruplex DNA. The protein is ATP-dependent DNA helicase DinG of Salmonella typhimurium (strain LT2 / SGSC1412 / ATCC 700720).